We begin with the raw amino-acid sequence, 188 residues long: 3-hydroxyanthranilate 3,4-dioxygenase 2 (188 aa).

Arg-46 contributes to the O2 binding site. Fe cation contacts are provided by His-50, Glu-70, and His-108. Glu-70 provides a ligand contact to substrate. 2 residues coordinate substrate: Arg-112 and Glu-122.

It belongs to the 3-HAO family. Fe(2+) serves as cofactor.

The protein resides in the cytoplasm. The catalysed reaction is 3-hydroxyanthranilate + O2 = (2Z,4Z)-2-amino-3-carboxymuconate 6-semialdehyde. Its pathway is cofactor biosynthesis; NAD(+) biosynthesis; quinolinate from L-kynurenine: step 3/3. In terms of biological role, catalyzes the oxidative ring opening of 3-hydroxyanthranilate to 2-amino-3-carboxymuconate semialdehyde, which spontaneously cyclizes to quinolinate. The sequence is that of 3-hydroxyanthranilate 3,4-dioxygenase 2 (bna1-2) from Aspergillus fumigatus (strain CBS 144.89 / FGSC A1163 / CEA10) (Neosartorya fumigata).